A 557-amino-acid polypeptide reads, in one-letter code: Dihydroxy-acid dehydratase (557 aa).

Residue Asp-78 coordinates Mg(2+). Cys-119 contributes to the [2Fe-2S] cluster binding site. Positions 120 and 121 each coordinate Mg(2+). Lys-121 is modified (N6-carboxylysine). [2Fe-2S] cluster is bound at residue Cys-192. A Mg(2+)-binding site is contributed by Glu-446. Residue Ser-472 is the Proton acceptor of the active site.

The protein belongs to the IlvD/Edd family. As to quaternary structure, homodimer. [2Fe-2S] cluster serves as cofactor. The cofactor is Mg(2+).

It carries out the reaction (2R)-2,3-dihydroxy-3-methylbutanoate = 3-methyl-2-oxobutanoate + H2O. The enzyme catalyses (2R,3R)-2,3-dihydroxy-3-methylpentanoate = (S)-3-methyl-2-oxopentanoate + H2O. It participates in amino-acid biosynthesis; L-isoleucine biosynthesis; L-isoleucine from 2-oxobutanoate: step 3/4. It functions in the pathway amino-acid biosynthesis; L-valine biosynthesis; L-valine from pyruvate: step 3/4. Functionally, functions in the biosynthesis of branched-chain amino acids. Catalyzes the dehydration of (2R,3R)-2,3-dihydroxy-3-methylpentanoate (2,3-dihydroxy-3-methylvalerate) into 2-oxo-3-methylpentanoate (2-oxo-3-methylvalerate) and of (2R)-2,3-dihydroxy-3-methylbutanoate (2,3-dihydroxyisovalerate) into 2-oxo-3-methylbutanoate (2-oxoisovalerate), the penultimate precursor to L-isoleucine and L-valine, respectively. In Campylobacter curvus (strain 525.92), this protein is Dihydroxy-acid dehydratase.